A 213-amino-acid polypeptide reads, in one-letter code: Proteasome subunit beta 1 (213 aa).

A propeptide spans 1–18 (MVFIAVFNGVFAMSSLPG) (removed in mature form; by autocatalysis). T19 (nucleophile) is an active-site residue.

The protein belongs to the peptidase T1B family. The 20S proteasome core is composed of 14 alpha and 14 beta subunits that assemble into four stacked heptameric rings, resulting in a barrel-shaped structure. The two inner rings, each composed of seven catalytic beta subunits, are sandwiched by two outer rings, each composed of seven alpha subunits. The catalytic chamber with the active sites is on the inside of the barrel. Has a gated structure, the ends of the cylinder being occluded by the N-termini of the alpha-subunits. Is capped at one or both ends by the proteasome regulatory ATPase, PAN.

It localises to the cytoplasm. It catalyses the reaction Cleavage of peptide bonds with very broad specificity.. Its activity is regulated as follows. The formation of the proteasomal ATPase PAN-20S proteasome complex, via the docking of the C-termini of PAN into the intersubunit pockets in the alpha-rings, triggers opening of the gate for substrate entry. Interconversion between the open-gate and close-gate conformations leads to a dynamic regulation of the 20S proteasome proteolysis activity. Functionally, component of the proteasome core, a large protease complex with broad specificity involved in protein degradation. The protein is Proteasome subunit beta 1 of Staphylothermus marinus (strain ATCC 43588 / DSM 3639 / JCM 9404 / F1).